The following is a 217-amino-acid chain: Thiamine-phosphate synthase (217 aa).

Residues glutamine 42 to lysine 46 and aspartate 77 each bind 4-amino-2-methyl-5-(diphosphooxymethyl)pyrimidine. Aspartate 78 and aspartate 97 together coordinate Mg(2+). Serine 117 serves as a coordination point for 4-amino-2-methyl-5-(diphosphooxymethyl)pyrimidine. Threonine 144–serine 146 is a binding site for 2-[(2R,5Z)-2-carboxy-4-methylthiazol-5(2H)-ylidene]ethyl phosphate. 4-amino-2-methyl-5-(diphosphooxymethyl)pyrimidine is bound at residue lysine 147. Residues glycine 175 and isoleucine 195 to threonine 196 each bind 2-[(2R,5Z)-2-carboxy-4-methylthiazol-5(2H)-ylidene]ethyl phosphate.

Belongs to the thiamine-phosphate synthase family. It depends on Mg(2+) as a cofactor.

It carries out the reaction 2-[(2R,5Z)-2-carboxy-4-methylthiazol-5(2H)-ylidene]ethyl phosphate + 4-amino-2-methyl-5-(diphosphooxymethyl)pyrimidine + 2 H(+) = thiamine phosphate + CO2 + diphosphate. The catalysed reaction is 2-(2-carboxy-4-methylthiazol-5-yl)ethyl phosphate + 4-amino-2-methyl-5-(diphosphooxymethyl)pyrimidine + 2 H(+) = thiamine phosphate + CO2 + diphosphate. It catalyses the reaction 4-methyl-5-(2-phosphooxyethyl)-thiazole + 4-amino-2-methyl-5-(diphosphooxymethyl)pyrimidine + H(+) = thiamine phosphate + diphosphate. The protein operates within cofactor biosynthesis; thiamine diphosphate biosynthesis; thiamine phosphate from 4-amino-2-methyl-5-diphosphomethylpyrimidine and 4-methyl-5-(2-phosphoethyl)-thiazole: step 1/1. Condenses 4-methyl-5-(beta-hydroxyethyl)thiazole monophosphate (THZ-P) and 2-methyl-4-amino-5-hydroxymethyl pyrimidine pyrophosphate (HMP-PP) to form thiamine monophosphate (TMP). This Levilactobacillus brevis (strain ATCC 367 / BCRC 12310 / CIP 105137 / JCM 1170 / LMG 11437 / NCIMB 947 / NCTC 947) (Lactobacillus brevis) protein is Thiamine-phosphate synthase.